The chain runs to 535 residues: uncharacterized protein (535 aa).

The helical transmembrane segment at 17-37 (IVLLCMIGFFCTTFMRIHFAL) threads the bilayer. Asparagine 44 and asparagine 61 each carry an N-linked (GlcNAc...) asparagine glycan. Helical transmembrane passes span 107 to 127 (LIFS…MFFI), 144 to 164 (ILVT…SVFL), 167 to 187 (IGMG…IGNW), 199 to 219 (IFTL…AAVC), 225 to 245 (WPAT…LWFF), and 292 to 312 (AFLG…LFQI). N-linked (GlcNAc...) asparagine glycosylation occurs at asparagine 329. The next 5 membrane-spanning stretches (helical) occupy residues 331–351 (TFTA…GIGI), 368–388 (VSHG…AFFV), 395–415 (TGLI…SGFY), 429–451 (MSAI…MSMF), and 463–483 (IFIG…LFGS).

It belongs to the major facilitator superfamily. Sodium/anion cotransporter family.

It is found in the membrane. This is an uncharacterized protein from Caenorhabditis elegans.